The sequence spans 58 residues: Light-harvesting protein B-870 alpha chain (58 aa).

Residues 1–15 lie on the Cytoplasmic side of the membrane; that stretch reads MSKFYKIWLVFDPRR. The chain crosses the membrane as a helical span at residues 16–36; that stretch reads VFVAQGVFLFLLAVLIHLILL. His32 serves as a coordination point for a bacteriochlorophyll. At 37 to 58 the chain is on the periplasmic side; it reads STPAFNWLTVATAKHGYVAAAQ.

Belongs to the antenna complex alpha subunit family. In terms of assembly, the core complex is formed by different alpha and beta chains, binding bacteriochlorophyll molecules, and arranged most probably in tetrameric structures disposed around the reaction center. The non-pigmented gamma chains may constitute additional components.

The protein resides in the cell inner membrane. Its function is as follows. Antenna complexes are light-harvesting systems, which transfer the excitation energy to the reaction centers. The polypeptide is Light-harvesting protein B-870 alpha chain (pufA) (Rhodobacter capsulatus (Rhodopseudomonas capsulata)).